Consider the following 165-residue polypeptide: uncharacterized protein (165 aa).

A helical transmembrane segment spans residues 7 to 29; sequence YPLIFTAFLLIAFCLIFFSYHLI.

The protein localises to the membrane. This is an uncharacterized protein from Bacillus subtilis (strain 168).